We begin with the raw amino-acid sequence, 394 residues long: Purine ribonucleoside efflux pump NepI (394 aa).

Residues 1 to 21 (MSEFIAENRGADAITRPNWSA) are Cytoplasmic-facing. The helical transmembrane segment at 22 to 42 (VFSVAFCVACLIIVEFLPVSL) threads the bilayer. The Periplasmic segment spans residues 43–54 (LTPMAQDLGISE). The helical transmembrane segment at 55–75 (GVAGQSVTVTAFVAMFASLFI) threads the bilayer. At 76 to 85 (TQTIQATDRR) the chain is on the cytoplasmic side. A helical transmembrane segment spans residues 86–106 (YVVILFAVLLTISCLLVSFAN). Position 107 (serine 107) is a topological domain, periplasmic. The helical transmembrane segment at 108-128 (FSLLLIGRACLGLALGGFWAM) threads the bilayer. Residues 129–147 (SASLTMRLVPPRTVPKALS) are Cytoplasmic-facing. The chain crosses the membrane as a helical span at residues 148-168 (VIFGAVSIALVIAAPLGSFLG). Topologically, residues 169-175 (ELIGWRN) are periplasmic. The helical transmembrane segment at 176–196 (VFNAAAVMGVLCIFWIIKSLP) threads the bilayer. At 197–215 (SLPGKPSHQKQNTFRLLQR) the chain is on the cytoplasmic side. A helical transmembrane segment spans residues 216 to 236 (PGVMAGMIAIFMSFAGQFAFF). Residues 237–255 (TYIRPVYMNLAGFGVDGLT) are Periplasmic-facing. The chain crosses the membrane as a helical span at residues 256-276 (LVLLSFGIASFIGTSLSSFIL). Residues 277–281 (KRSVK) lie on the Cytoplasmic side of the membrane. Residues 282–302 (LALAGAPLILAVSALVLTLCG) traverse the membrane as a helical segment. At 303–305 (SDK) the chain is on the periplasmic side. The chain crosses the membrane as a helical span at residues 306–326 (IVATGVAIIWGLTFALVPVGW). The Cytoplasmic portion of the chain corresponds to 327–343 (STWSTRSLADQAEKAGS). A helical membrane pass occupies residues 344-364 (IQVAVIQLANTCGAAIGGYAL). At 365–366 (DN) the chain is on the periplasmic side. The helical transmembrane segment at 367-387 (IGLTSPLMLSGTLMLLTALLV) threads the bilayer. At 388-394 (TAKVKMK) the chain is on the cytoplasmic side.

Belongs to the major facilitator superfamily. DHA1 family. NepI (TC 2.A.1.2.26) subfamily.

It is found in the cell inner membrane. The catalysed reaction is inosine(in) + H(+)(out) = inosine(out) + H(+)(in). It carries out the reaction guanosine(in) + H(+)(out) = guanosine(out) + H(+)(in). Functionally, involved in the efflux of purine ribonucleosides, such as inosine and guanosine. This chain is Purine ribonucleoside efflux pump NepI, found in Shigella dysenteriae serotype 1 (strain Sd197).